The following is a 147-amino-acid chain: Hemoglobin subunit delta (147 aa).

The Globin domain occupies 3–147 (HLTADETALV…VANALAHKYH (145 aa)). The residue at position 51 (S51) is a Phosphoserine. Residues H64 and H93 each coordinate heme b.

The protein belongs to the globin family. Heterotetramer of two delta chains and two alpha chains. Red blood cells.

The polypeptide is Hemoglobin subunit delta (HBD) (Dugong dugon (Dugong)).